The chain runs to 241 residues: Large ribosomal subunit protein uL30 (241 aa).

The segment at 1–25 (MASTLKPETLVKKSKAQQKTAEERA) is disordered.

This sequence belongs to the universal ribosomal protein uL30 family.

This is Large ribosomal subunit protein uL30 (RPL7) from Debaryomyces hansenii (strain ATCC 36239 / CBS 767 / BCRC 21394 / JCM 1990 / NBRC 0083 / IGC 2968) (Yeast).